The following is a 308-amino-acid chain: Aspartate carbamoyltransferase catalytic subunit (308 aa).

Residues Arg-57 and Thr-58 each contribute to the carbamoyl phosphate site. Residue Lys-86 coordinates L-aspartate. Carbamoyl phosphate-binding residues include Arg-107, His-135, and Gln-138. Positions 167 and 228 each coordinate L-aspartate. Residues Leu-267 and Pro-268 each contribute to the carbamoyl phosphate site.

Belongs to the aspartate/ornithine carbamoyltransferase superfamily. ATCase family. As to quaternary structure, heterooligomer of catalytic and regulatory chains.

The catalysed reaction is carbamoyl phosphate + L-aspartate = N-carbamoyl-L-aspartate + phosphate + H(+). It functions in the pathway pyrimidine metabolism; UMP biosynthesis via de novo pathway; (S)-dihydroorotate from bicarbonate: step 2/3. Catalyzes the condensation of carbamoyl phosphate and aspartate to form carbamoyl aspartate and inorganic phosphate, the committed step in the de novo pyrimidine nucleotide biosynthesis pathway. In Methanosarcina acetivorans (strain ATCC 35395 / DSM 2834 / JCM 12185 / C2A), this protein is Aspartate carbamoyltransferase catalytic subunit.